The following is a 791-amino-acid chain: Cytochrome c oxidase polypeptide I+III (791 aa).

The tract at residues 1–473 (MAITAKPKAG…LLSTIGAYIL (473 aa)) is COX1. A helical transmembrane segment spans residues 29-49 (LMYTATAFFAFALAGVFSLLI). Fe(II)-heme a is bound at residue histidine 73. 17 helical membrane passes run 78-98 (LFFFIIQAGLTGFGNFVVPLM), 111-131 (AFSYWAFLGAIVLALMSYFFP), 155-175 (FYLAAILLLGFSSLLGNANFV), 201-221 (ASVLNLFSLAGLTAATLLVLL), 244-264 (FFWFYSHPTVYVMLLPYLGIL), 282-302 (MVWAQMGIVVLGTMVWAHHMF), 312-332 (IAFAFFTALIAVPTGVKLFNI), 347-367 (LYWVLGFIFNFLLGGITGVML), 381-401 (FVVAHFHNVLMAGSGFGAFAG), 423-443 (FWLFLVGYLLTFLPQYALGYL), 464-484 (LLSTIGAYILGLGGLVWIYTM), 566-586 (FAFFVAVAALPVPNVWMWVFL), 617-637 (AWMGMAWFIVSEVGLFAILIA), 657-677 (LWLALLNTFLLVSSSFTVHFA), 691-711 (FGLLVTIILGVLFFLVQSWEF), 729-749 (FFTIVGLHGLHVVIGGFGLIL), and 771-791 (SMYWHLVDAVWLVIVTIFYVW). Cu cation is bound by residues histidine 250, tyrosine 254, histidine 299, and histidine 300. The 1'-histidyl-3'-tyrosine (His-Tyr) cross-link spans 250–254 (HPTVY). Histidine 385 contributes to the heme a3 binding site. Histidine 387 is a binding site for Fe(II)-heme a. The COX3 stretch occupies residues 545-791 (DPAHIHLPNS…LVIVTIFYVW (247 aa)).

The protein in the N-terminal section; belongs to the heme-copper respiratory oxidase family. It in the C-terminal section; belongs to the cytochrome c oxidase subunit 3 family. Possibly a heterodimer of A-protein (contains: cytochrome c oxidase subunits I and III) and subunit II. The A-protein could also present a precursor form of subunits I and III. Cu(2+) serves as cofactor. It depends on heme as a cofactor.

It is found in the cell membrane. The catalysed reaction is 4 Fe(II)-[cytochrome c] + O2 + 8 H(+)(in) = 4 Fe(III)-[cytochrome c] + 2 H2O + 4 H(+)(out). It functions in the pathway energy metabolism; oxidative phosphorylation. Functionally, cytochrome c oxidase is the component of the respiratory chain that catalyzes the reduction of oxygen to water. Subunits 1-3 form the functional core of the enzyme complex. Co I is the catalytic subunit of the enzyme. Electrons originating in cytochrome c are transferred via the copper A center of subunit 2 and heme a of subunit 1 to the bimetallic center formed by heme a3 and copper B. This cytochrome c oxidase shows proton pump activity across the membrane in addition to the electron transfer. This chain is Cytochrome c oxidase polypeptide I+III (caaA), found in Thermus thermophilus (strain ATCC 27634 / DSM 579 / HB8).